A 153-amino-acid chain; its full sequence is Cyanate hydratase (153 aa).

Active-site residues include Arg88, Glu91, and Ser114.

This sequence belongs to the cyanase family.

It catalyses the reaction cyanate + hydrogencarbonate + 3 H(+) = NH4(+) + 2 CO2. Functionally, catalyzes the reaction of cyanate with bicarbonate to produce ammonia and carbon dioxide. The chain is Cyanate hydratase from Mycolicibacterium vanbaalenii (strain DSM 7251 / JCM 13017 / BCRC 16820 / KCTC 9966 / NRRL B-24157 / PYR-1) (Mycobacterium vanbaalenii).